A 481-amino-acid chain; its full sequence is UDP-N-acetylmuramoyl-L-alanyl-D-glutamate--L-lysine ligase (481 aa).

S42 contributes to the UDP-N-acetyl-alpha-D-muramoyl-L-alanyl-D-glutamate binding site. 118–124 lines the ATP pocket; the sequence is GTKGKTT. Residues Q158, 160–161, S187, and R195 contribute to the UDP-N-acetyl-alpha-D-muramoyl-L-alanyl-D-glutamate site; that span reads TT. At K229 the chain carries N6-carboxylysine. An L-lysine recognition motif motif is present at residues 404–407; sequence DDPN.

The protein belongs to the MurCDEF family. MurE subfamily. Post-translationally, carboxylation is probably crucial for Mg(2+) binding and, consequently, for the gamma-phosphate positioning of ATP.

It localises to the cytoplasm. It catalyses the reaction UDP-N-acetyl-alpha-D-muramoyl-L-alanyl-D-glutamate + L-lysine + ATP = UDP-N-acetyl-alpha-D-muramoyl-L-alanyl-gamma-D-glutamyl-L-lysine + ADP + phosphate + H(+). It functions in the pathway cell wall biogenesis; peptidoglycan biosynthesis. Its function is as follows. Catalyzes the addition of L-lysine to the nucleotide precursor UDP-N-acetylmuramoyl-L-alanyl-D-glutamate (UMAG) in the biosynthesis of bacterial cell-wall peptidoglycan. This chain is UDP-N-acetylmuramoyl-L-alanyl-D-glutamate--L-lysine ligase, found in Streptococcus pyogenes serotype M28 (strain MGAS6180).